Consider the following 619-residue polypeptide: Kinesin light chain 4 (619 aa).

Position 2 is an N-acetylserine (Ser-2). Residues 32-150 (GLESLHSEHQ…EEEKKHLEFL (119 aa)) adopt a coiled-coil conformation. Residues 55–88 (QQGGHEEGLVHEKARQLRRSMENIELGLSEAQVM) form a TPR 1 repeat. Residues 156–175 (YDEDGHSMEEKEGDASKDSL) show a composition bias toward basic and acidic residues. The disordered stretch occupies residues 156–200 (YDEDGHSMEEKEGDASKDSLDDLFPNEEEEDSSNDLSRGQGAAAA). A Phosphoserine modification is found at Ser-174. Positions 179-188 (FPNEEEEDSS) are enriched in acidic residues. TPR repeat units lie at residues 211–244 (LRTLHNLVIQYAAQGRYEVAVPLCKQALEDLERT), 253–286 (ATMLNILALVYRDQNKYKEAAHLLNDALSIREST), 295–328 (AATLNNLAVLYGKRGKYKEAEPLCQRALEIREKV), 337–370 (AKQLNNLALLCQNQGKYEAVERYYQRALAIYERQ), and 379–412 (ARTKNNLASCYLKQGKYSEAETLYKEILTRAHVQ). At Ser-460 the chain carries Phosphoserine. Residues 464–497 (NTTLRNLGALYRRQGKLEAAETLEECALRSRKQG) form a TPR 7 repeat. Phosphoserine is present on residues Ser-565, Ser-566, and Ser-590. The segment at 571–619 (RKLQGTEPRPSSSNMKRAASLNYLNQPNAAPLQTSRGLSASTVDLSSSS) is disordered. Residues 592 to 608 (NYLNQPNAAPLQTSRGL) show a composition bias toward polar residues. Low complexity predominate over residues 609-619 (SASTVDLSSSS). Position 612 is a phosphothreonine (Thr-612).

Belongs to the kinesin light chain family. In terms of assembly, oligomeric complex composed of two heavy chains and two light chains.

It localises to the cytoplasm. The protein localises to the cytoskeleton. Kinesin is a microtubule-associated force-producing protein that may play a role in organelle transport. The light chain may function in coupling of cargo to the heavy chain or in the modulation of its ATPase activity. In Rattus norvegicus (Rat), this protein is Kinesin light chain 4 (Klc4).